The chain runs to 156 residues: Succinate dehydrogenase assembly factor 2-B, mitochondrial (156 aa).

The transit peptide at 1–24 (MLRQFIISTVGRRQPLLMILQSRL) directs the protein to the mitochondrion.

This sequence belongs to the SDHAF2 family. Interacts with the flavoprotein subunit within the SDH catalytic dimer.

It is found in the mitochondrion matrix. In terms of biological role, plays an essential role in the assembly of succinate dehydrogenase (SDH), an enzyme complex (also referred to as respiratory complex II) that is a component of both the tricarboxylic acid (TCA) cycle and the mitochondrial electron transport chain, and which couples the oxidation of succinate to fumarate with the reduction of ubiquinone (coenzyme Q) to ubiquinol. Required for flavinylation (covalent attachment of FAD) of the flavoprotein subunit of the SDH catalytic dimer. This chain is Succinate dehydrogenase assembly factor 2-B, mitochondrial, found in Drosophila yakuba (Fruit fly).